The primary structure comprises 141 residues: Cholinesterase (141 aa).

N39 is a glycosylation site (N-linked (GlcNAc...) asparagine). Residue 49 to 50 (GG) coordinates substrate. S131 (acyl-ester intermediate) is an active-site residue. A Phosphoserine modification is found at S131.

The protein belongs to the type-B carboxylesterase/lipase family. In terms of assembly, homotetramer; disulfide-linked. Dimer of dimers. As to expression, present in most cells except erythrocytes.

It localises to the secreted. It carries out the reaction an acylcholine + H2O = a carboxylate + choline + H(+). Functionally, esterase with broad substrate specificity. Contributes to the inactivation of the neurotransmitter acetylcholine. Can degrade neurotoxic organophosphate esters. The sequence is that of Cholinesterase (BCHE) from Macaca mulatta (Rhesus macaque).